Consider the following 294-residue polypeptide: ATP synthase gamma chain (294 aa).

Belongs to the ATPase gamma chain family. As to quaternary structure, F-type ATPases have 2 components, CF(1) - the catalytic core - and CF(0) - the membrane proton channel. CF(1) has five subunits: alpha(3), beta(3), gamma(1), delta(1), epsilon(1). CF(0) has three main subunits: a, b and c.

It is found in the cell inner membrane. In terms of biological role, produces ATP from ADP in the presence of a proton gradient across the membrane. The gamma chain is believed to be important in regulating ATPase activity and the flow of protons through the CF(0) complex. The chain is ATP synthase gamma chain from Rhizobium leguminosarum bv. trifolii (strain WSM2304).